The primary structure comprises 317 residues: MPVQGSQRRLLGSLNSTPTATPKLGLAANQTGAQCLEVSIPDGLFLSLGLVSLVENVLVVAAIARNRNLHSPMYCFICCLALSDLLVSGSNMLETAVILLLEAGALAARAAVVQQLDNVIDVITCSSMLSSLCFLGAIAMDRYISIFYALRYHSIVTLPRARGVVAAIWVASILFSTLFIAYYDHVAVLLCLVVFFLAMLVLMAVLYVHMLARACQHAQGIAQLHKRQRPAHQGVGLKGAATLTILLGIFFLCWGPFFLHLTLIVLCPQHPTCSCIFKNFNLFLALIICNAIIDPLIYAFRSQELRRTLKKVLLCSW.

At 1-37 (MPVQGSQRRLLGSLNSTPTATPKLGLAANQTGAQCLE) the chain is on the extracellular side. N29 is a glycosylation site (N-linked (GlcNAc...) asparagine). Residues 38 to 63 (VSIPDGLFLSLGLVSLVENVLVVAAI) form a helical membrane-spanning segment. The Cytoplasmic segment spans residues 64–72 (ARNRNLHSP). A helical membrane pass occupies residues 73 to 93 (MYCFICCLALSDLLVSGSNML). The Extracellular segment spans residues 94–118 (ETAVILLLEAGALAARAAVVQQLDN). A helical transmembrane segment spans residues 119 to 140 (VIDVITCSSMLSSLCFLGAIAM). The Cytoplasmic segment spans residues 141-163 (DRYISIFYALRYHSIVTLPRARG). A helical membrane pass occupies residues 164–183 (VVAAIWVASILFSTLFIAYY). At 184–191 (DHVAVLLC) the chain is on the extracellular side. Residues 192 to 211 (LVVFFLAMLVLMAVLYVHML) traverse the membrane as a helical segment. The Cytoplasmic portion of the chain corresponds to 212–240 (ARACQHAQGIAQLHKRQRPAHQGVGLKGA). The helical transmembrane segment at 241-266 (ATLTILLGIFFLCWGPFFLHLTLIVL) threads the bilayer. Over 267–279 (CPQHPTCSCIFKN) the chain is Extracellular. Residues 280-300 (FNLFLALIICNAIIDPLIYAF) form a helical membrane-spanning segment. At 301–317 (RSQELRRTLKKVLLCSW) the chain is on the cytoplasmic side. A lipid anchor (S-palmitoyl cysteine) is attached at C315.

The protein belongs to the G-protein coupled receptor 1 family. As to quaternary structure, interacts with MGRN1, but does not undergo MGRN1-mediated ubiquitination; this interaction competes with GNAS-binding and thus inhibits agonist-induced cAMP production. Interacts with OPN3; the interaction results in a decrease in MC1R-mediated cAMP signaling and ultimately a decrease in melanin production in melanocytes.

Its subcellular location is the cell membrane. In terms of biological role, receptor for MSH (alpha, beta and gamma) and ACTH. The activity of this receptor is mediated by G proteins which activate adenylate cyclase. Mediates melanogenesis, the production of eumelanin (black/brown) and phaeomelanin (red/yellow), via regulation of cAMP signaling in melanocytes. This is Melanocyte-stimulating hormone receptor (MC1R) from Presbytis comata (Grizzled leaf monkey).